The chain runs to 713 residues: tRNA 5-methylaminomethyl-2-thiouridine biosynthesis bifunctional protein MnmC (713 aa).

The segment at methionine 1–proline 300 is tRNA (mnm(5)s(2)U34)-methyltransferase. An FAD-dependent cmnm(5)s(2)U34 oxidoreductase region spans residues isoleucine 306 to leucine 713.

This sequence in the N-terminal section; belongs to the methyltransferase superfamily. tRNA (mnm(5)s(2)U34)-methyltransferase family. The protein in the C-terminal section; belongs to the DAO family. It depends on FAD as a cofactor.

The protein localises to the cytoplasm. The catalysed reaction is 5-aminomethyl-2-thiouridine(34) in tRNA + S-adenosyl-L-methionine = 5-methylaminomethyl-2-thiouridine(34) in tRNA + S-adenosyl-L-homocysteine + H(+). Functionally, catalyzes the last two steps in the biosynthesis of 5-methylaminomethyl-2-thiouridine (mnm(5)s(2)U) at the wobble position (U34) in tRNA. Catalyzes the FAD-dependent demodification of cmnm(5)s(2)U34 to nm(5)s(2)U34, followed by the transfer of a methyl group from S-adenosyl-L-methionine to nm(5)s(2)U34, to form mnm(5)s(2)U34. This Shewanella baltica (strain OS155 / ATCC BAA-1091) protein is tRNA 5-methylaminomethyl-2-thiouridine biosynthesis bifunctional protein MnmC.